We begin with the raw amino-acid sequence, 235 residues long: Large ribosomal subunit protein bL25 (235 aa).

Residues 201–235 (PVAEAKGKGKAAKPAATAKPAAAAAKPAAKPKAKK) form a disordered region. The segment covering 212–228 (AKPAATAKPAAAAAKPA) has biased composition (low complexity).

It belongs to the bacterial ribosomal protein bL25 family. CTC subfamily. As to quaternary structure, part of the 50S ribosomal subunit; part of the 5S rRNA/L5/L18/L25 subcomplex. Contacts the 5S rRNA. Binds to the 5S rRNA independently of L5 and L18.

Its function is as follows. This is one of the proteins that binds to the 5S RNA in the ribosome where it forms part of the central protuberance. The protein is Large ribosomal subunit protein bL25 of Verminephrobacter eiseniae (strain EF01-2).